Here is a 147-residue protein sequence, read N- to C-terminus: Prefoldin subunit alpha 2 (147 aa).

It belongs to the prefoldin subunit alpha family. Heterohexamer of two alpha and four beta subunits.

The protein localises to the cytoplasm. Its function is as follows. Molecular chaperone capable of stabilizing a range of proteins. Seems to fulfill an ATP-independent, HSP70-like function in archaeal de novo protein folding. This chain is Prefoldin subunit alpha 2 (pfdA2), found in Methanocaldococcus jannaschii (strain ATCC 43067 / DSM 2661 / JAL-1 / JCM 10045 / NBRC 100440) (Methanococcus jannaschii).